The following is a 128-amino-acid chain: Saitohin (128 aa).

The span at 77 to 87 shows a compositional bias: polar residues; the sequence is SYSSEENSRNG. The tract at residues 77 to 128 is disordered; sequence SYSSEENSRNGAEQGRQLSIEGPFQGQNCPSHPAAALPLPMRGESQATSCQV.

As to quaternary structure, interacts with PRDX6.

It localises to the cytoplasm. The protein resides in the nucleus. This chain is Saitohin (STH), found in Pan troglodytes (Chimpanzee).